We begin with the raw amino-acid sequence, 391 residues long: Chalcone synthase (391 aa).

Cys-164 is an active-site residue.

Belongs to the thiolase-like superfamily. Chalcone/stilbene synthases family.

The catalysed reaction is (E)-4-coumaroyl-CoA + 3 malonyl-CoA + 3 H(+) = 2',4,4',6'-tetrahydroxychalcone + 3 CO2 + 4 CoA. The protein operates within secondary metabolite biosynthesis; flavonoid biosynthesis. Its function is as follows. The primary product of this enzyme is 4,2',4',6'-tetrahydroxychalcone (also termed naringenin-chalcone or chalcone) which can under specific conditions spontaneously isomerize into naringenin. The polypeptide is Chalcone synthase (CHS) (Dianthus monspessulanus).